Here is a 312-residue protein sequence, read N- to C-terminus: MKVAVLGAAGGIGQALALLLKTQLPSGSELSLYDIAPVTPGVAVDLSHIPTAVKIKGFSGENARPALEGADVVLISAGVARKPGMDRSDLFNVNAGIVKNLVQQIAETCPKACVGIITNPVNTTVAIAAEVLKKAGVYDKNKLFGVTTLDIIRSNTFVAELKGKSPSDIEVPVIGGHSGVTILPLLSQIPGVSFSEQEVADLTKRIQNAGTEVVEAKAGGGSATLSMGQAAARFGLSLVRALQGEKGVVECAYVEGDGEHARFFSQPLLLGKNGIEERQSIGKLSAFEQQAMEGMLDTLKKDITLGEEFVSK.

Residues 7–13 (GAAGGIG) and Asp-34 contribute to the NAD(+) site. Positions 81 and 87 each coordinate substrate. Residues Asn-94 and 117–119 (ITN) each bind NAD(+). Positions 119 and 153 each coordinate substrate. The active-site Proton acceptor is His-177. Residue Met-227 participates in NAD(+) binding.

This sequence belongs to the LDH/MDH superfamily. MDH type 1 family. As to quaternary structure, homodimer.

It catalyses the reaction (S)-malate + NAD(+) = oxaloacetate + NADH + H(+). Functionally, catalyzes the reversible oxidation of malate to oxaloacetate. The sequence is that of Malate dehydrogenase from Enterobacter sp. (strain 638).